Here is a 638-residue protein sequence, read N- to C-terminus: 3D-(3,5/4)-trihydroxycyclohexane-1,2-dione hydrolase (638 aa).

Glutamate 67 lines the thiamine diphosphate pocket. Residues 442–523 are thiamine pyrophosphate binding; that stretch reads SLPGDLQRLW…INIMLFDNSG (82 aa). Mg(2+) contacts are provided by aspartate 494 and asparagine 521.

Belongs to the TPP enzyme family. It depends on Mg(2+) as a cofactor. Thiamine diphosphate serves as cofactor.

The catalysed reaction is 3D-3,5/4-trihydroxycyclohexane-1,2-dione + H2O = 5-deoxy-D-glucuronate + H(+). It functions in the pathway polyol metabolism; myo-inositol degradation into acetyl-CoA; acetyl-CoA from myo-inositol: step 3/7. In terms of biological role, involved in the cleavage of the C1-C2 bond of 3D-(3,5/4)-trihydroxycyclohexane-1,2-dione (THcHDO) to yield 5-deoxy-glucuronate (5DG). This is 3D-(3,5/4)-trihydroxycyclohexane-1,2-dione hydrolase from Listeria monocytogenes serotype 4b (strain F2365).